Consider the following 450-residue polypeptide: Phosphoglucosamine mutase (450 aa).

Ser101 acts as the Phosphoserine intermediate in catalysis. Ser101, Asp241, Asp243, and Asp245 together coordinate Mg(2+). A Phosphoserine modification is found at Ser101.

Belongs to the phosphohexose mutase family. The cofactor is Mg(2+). Activated by phosphorylation.

The catalysed reaction is alpha-D-glucosamine 1-phosphate = D-glucosamine 6-phosphate. Its function is as follows. Catalyzes the conversion of glucosamine-6-phosphate to glucosamine-1-phosphate. The polypeptide is Phosphoglucosamine mutase (Listeria welshimeri serovar 6b (strain ATCC 35897 / DSM 20650 / CCUG 15529 / CIP 8149 / NCTC 11857 / SLCC 5334 / V8)).